We begin with the raw amino-acid sequence, 337 residues long: Ketol-acid reductoisomerase (NADP(+)) (337 aa).

Positions 3–183 constitute a KARI N-terminal Rossmann domain; that stretch reads VEMFYDADAD…GGARAGVIKT (181 aa). NADP(+) is bound by residues 26–29, K49, S52, S54, and 84–87; these read YGSQ and DTAQ. H109 is a catalytic residue. G135 lines the NADP(+) pocket. One can recognise a KARI C-terminal knotted domain in the interval 184–329; the sequence is TFKEETETDL…KKLRDLMSWV (146 aa). Residues D192, E196, E228, and E232 each coordinate Mg(2+). Position 253 (S253) interacts with substrate.

It belongs to the ketol-acid reductoisomerase family. The cofactor is Mg(2+).

It carries out the reaction (2R)-2,3-dihydroxy-3-methylbutanoate + NADP(+) = (2S)-2-acetolactate + NADPH + H(+). It catalyses the reaction (2R,3R)-2,3-dihydroxy-3-methylpentanoate + NADP(+) = (S)-2-ethyl-2-hydroxy-3-oxobutanoate + NADPH + H(+). It functions in the pathway amino-acid biosynthesis; L-isoleucine biosynthesis; L-isoleucine from 2-oxobutanoate: step 2/4. The protein operates within amino-acid biosynthesis; L-valine biosynthesis; L-valine from pyruvate: step 2/4. In terms of biological role, involved in the biosynthesis of branched-chain amino acids (BCAA). Catalyzes an alkyl-migration followed by a ketol-acid reduction of (S)-2-acetolactate (S2AL) to yield (R)-2,3-dihydroxy-isovalerate. In the isomerase reaction, S2AL is rearranged via a Mg-dependent methyl migration to produce 3-hydroxy-3-methyl-2-ketobutyrate (HMKB). In the reductase reaction, this 2-ketoacid undergoes a metal-dependent reduction by NADPH to yield (R)-2,3-dihydroxy-isovalerate. This is Ketol-acid reductoisomerase (NADP(+)) from Mycolicibacterium vanbaalenii (strain DSM 7251 / JCM 13017 / BCRC 16820 / KCTC 9966 / NRRL B-24157 / PYR-1) (Mycobacterium vanbaalenii).